A 266-amino-acid polypeptide reads, in one-letter code: Diphthine synthase (266 aa).

Residues L9, D85, I88, 113 to 114 (TA), L168, A210, and H235 each bind S-adenosyl-L-methionine.

The protein belongs to the diphthine synthase family. Homodimer.

It carries out the reaction 2-[(3S)-amino-3-carboxypropyl]-L-histidyl-[translation elongation factor 2] + 3 S-adenosyl-L-methionine = diphthine-[translation elongation factor 2] + 3 S-adenosyl-L-homocysteine + 3 H(+). It participates in protein modification; peptidyl-diphthamide biosynthesis. Functionally, S-adenosyl-L-methionine-dependent methyltransferase that catalyzes the trimethylation of the amino group of the modified target histidine residue in translation elongation factor 2 (EF-2), to form an intermediate called diphthine. The three successive methylation reactions represent the second step of diphthamide biosynthesis. In Natronomonas pharaonis (strain ATCC 35678 / DSM 2160 / CIP 103997 / JCM 8858 / NBRC 14720 / NCIMB 2260 / Gabara) (Halobacterium pharaonis), this protein is Diphthine synthase.